The sequence spans 459 residues: Cysteine--tRNA ligase (459 aa).

C27 lines the Zn(2+) pocket. The 'HIGH' region signature appears at 29–39 (VTVYDDCHIGH). Zn(2+)-binding residues include C208, H233, and E237. Residues 265-269 (KMSKS) carry the 'KMSKS' region motif. ATP is bound at residue K268.

The protein belongs to the class-I aminoacyl-tRNA synthetase family. In terms of assembly, monomer. The cofactor is Zn(2+).

The protein resides in the cytoplasm. The enzyme catalyses tRNA(Cys) + L-cysteine + ATP = L-cysteinyl-tRNA(Cys) + AMP + diphosphate. In Francisella tularensis subsp. novicida (strain U112), this protein is Cysteine--tRNA ligase.